The chain runs to 255 residues: Cullin-like protein 3 (255 aa).

The protein belongs to the cullin family.

The protein is Cullin-like protein 3 of Arabidopsis thaliana (Mouse-ear cress).